We begin with the raw amino-acid sequence, 290 residues long: ATP synthase gamma chain (290 aa).

This sequence belongs to the ATPase gamma chain family. F-type ATPases have 2 components, CF(1) - the catalytic core - and CF(0) - the membrane proton channel. CF(1) has five subunits: alpha(3), beta(3), gamma(1), delta(1), epsilon(1). CF(0) has three main subunits: a, b and c.

Its subcellular location is the cell inner membrane. In terms of biological role, produces ATP from ADP in the presence of a proton gradient across the membrane. The gamma chain is believed to be important in regulating ATPase activity and the flow of protons through the CF(0) complex. The sequence is that of ATP synthase gamma chain from Chelativorans sp. (strain BNC1).